The chain runs to 356 residues: tRNA N6-adenosine threonylcarbamoyltransferase (356 aa).

Fe cation is bound by residues His115 and His119. Residues 138-142 (LVSGG), Asp171, Gly184, and Asn283 each bind substrate. Asp311 lines the Fe cation pocket.

It belongs to the KAE1 / TsaD family. The cofactor is Fe(2+).

Its subcellular location is the cytoplasm. The catalysed reaction is L-threonylcarbamoyladenylate + adenosine(37) in tRNA = N(6)-L-threonylcarbamoyladenosine(37) in tRNA + AMP + H(+). Required for the formation of a threonylcarbamoyl group on adenosine at position 37 (t(6)A37) in tRNAs that read codons beginning with adenine. Is involved in the transfer of the threonylcarbamoyl moiety of threonylcarbamoyl-AMP (TC-AMP) to the N6 group of A37, together with TsaE and TsaB. TsaD likely plays a direct catalytic role in this reaction. This chain is tRNA N6-adenosine threonylcarbamoyltransferase, found in Prochlorococcus marinus subsp. pastoris (strain CCMP1986 / NIES-2087 / MED4).